The chain runs to 130 residues: MEAILMIGVITLCVIFLLSGRNNKKKQEIRELEDYLEDLNQRIVQRTQILSELNEVITNRSVDKSVNMSACEIAVLDLYEQSNIRIPSDIIEDMVNQRLQSEQDVLNYIETQRTYWKLENQKKLYRGSLK.

Residues 1-20 (MEAILMIGVITLCVIFLLSG) traverse the membrane as a helical segment. The stretch at 17–56 (LLSGRNNKKKQEIRELEDYLEDLNQRIVQRTQILSELNEV) forms a coiled coil. A DNA-binding region spans residues 70–130 (ACEIAVLDLY…QKKLYRGSLK (61 aa)).

Belongs to the phi29likevirus gp16.7 family. Homodimer; homooligomer. Interacts with DNA; one dsDNA binding subunit is constituted by three p16.7 dimers.

The protein localises to the host cell membrane. Its function is as follows. Binds to the long stretches of ssDNA of the viral DNA replication intermediates created during the protein-primed mechanism of replication of the viral genome and attaches the viral DNA to the membrane of the infected cells. Required for the redistribution of replicating viral DNA from the initial replication site to membrane-associated sites surrounding the nucleoid. Required for the second pull step of DNA ejection. This chain is DNA replication protein 16.7 (16.7), found in Bacillus phage phi15 (Bacteriophage phi-15).